Here is a 484-residue protein sequence, read N- to C-terminus: Cysteine desulfurase, mitochondrial (484 aa).

A compositionally biased stretch (low complexity) spans 29 to 42; the sequence is LATSASTSSSTTTS. Residues 29–69 form a disordered region; it reads LATSASTSSSTTTSNAETGELHVSTPLDSPSVHPPDGSSIS. Pyridoxal 5'-phosphate contacts are provided by residues 153 to 154, Asn233, Gln261, and 281 to 283; these read AT and SSH. At Lys284 the chain carries N6-(pyridoxal phosphate)lysine. Thr321 contributes to the pyridoxal 5'-phosphate binding site. The Cysteine persulfide intermediate role is filled by Cys408. Cys408 serves as a coordination point for [2Fe-2S] cluster.

It belongs to the class-V pyridoxal-phosphate-dependent aminotransferase family. NifS/IscS subfamily. Pyridoxal 5'-phosphate is required as a cofactor.

The protein localises to the mitochondrion. The catalysed reaction is (sulfur carrier)-H + L-cysteine = (sulfur carrier)-SH + L-alanine. In terms of biological role, catalyzes the removal of elemental sulfur from cysteine to produce alanine. It supplies the inorganic sulfur for iron-sulfur (Fe-S) clusters. Plays a role in both tRNA-processing and mitochondrial metabolism. Involved in the 2-thio-modification of both 5-carboxymethylaminomethyl-2-thiouridine in mitochondrial tRNAs and 5-methoxycarbonylmethyl-2-thiouridine (mcm5s2U) in cytoplasmic tRNAs. This Candida maltosa (Yeast) protein is Cysteine desulfurase, mitochondrial.